Consider the following 297-residue polypeptide: ER membrane protein complex subunit 2 (297 aa).

Alanine 2 is modified (N-acetylalanine). TPR repeat units follow at residues 87–120 (HRVK…DPTN), 155–188 (QEAW…NPHN), and 192–225 (CQQY…NNRN). At lysine 255 the chain carries N6-acetyllysine.

Belongs to the EMC2 family. In terms of assembly, component of the ER membrane protein complex (EMC). Interacts with WNK1 (via amphipathic alpha-helix region); promoting the ER membrane protein complex assembly by preventing EMC2 ubiquitination. Post-translationally, ubiquitinated when soluble in the cytoplasm, leading to its degradation by the proteasome. Interaction with EMC2 prevents its ubiquitination and degradation.

The protein resides in the endoplasmic reticulum membrane. Its function is as follows. Part of the endoplasmic reticulum membrane protein complex (EMC) that enables the energy-independent insertion into endoplasmic reticulum membranes of newly synthesized membrane proteins. Preferentially accommodates proteins with transmembrane domains that are weakly hydrophobic or contain destabilizing features such as charged and aromatic residues. Involved in the cotranslational insertion of multi-pass membrane proteins in which stop-transfer membrane-anchor sequences become ER membrane spanning helices. It is also required for the post-translational insertion of tail-anchored/TA proteins in endoplasmic reticulum membranes. By mediating the proper cotranslational insertion of N-terminal transmembrane domains in an N-exo topology, with translocated N-terminus in the lumen of the ER, controls the topology of multi-pass membrane proteins like the G protein-coupled receptors. By regulating the insertion of various proteins in membranes, it is indirectly involved in many cellular processes. This is ER membrane protein complex subunit 2 from Homo sapiens (Human).